A 126-amino-acid polypeptide reads, in one-letter code: Histone H2B type 1-P (126 aa).

Residues 1 to 36 (MPEPVKSVPAPKKGSKKAVTKAQKKDGKKRKRSRKE) form a disordered region. The residue at position 2 (Pro2) is an N-acetylproline. An ADP-ribosyl glutamic acid modification is found at Glu3. Lys6 bears the N6-(2-hydroxyisobutyryl)lysine; alternate mark. Lys6 is modified (N6-(beta-hydroxybutyryl)lysine; alternate). Lys6 carries the N6-acetyllysine; alternate modification. N6-butyryllysine; alternate is present on Lys6. Lys6 is subject to N6-crotonyllysine; alternate. Lys6 carries the post-translational modification N6-lactoyllysine; alternate. Lys6 is covalently cross-linked (Glycyl lysine isopeptide (Lys-Gly) (interchain with G-Cter in SUMO2); alternate). At Ser7 the chain carries ADP-ribosylserine. Lys12 carries the post-translational modification N6-(beta-hydroxybutyryl)lysine; alternate. An N6-acetyllysine; alternate mark is found at Lys12 and Lys13. Lys12 and Lys13 each carry N6-crotonyllysine; alternate. Lys12 is subject to N6-lactoyllysine; alternate. An N6-(2-hydroxyisobutyryl)lysine; alternate modification is found at Lys13. A Phosphoserine; by STK4/MST1 modification is found at Ser15. N6-acetyllysine; alternate is present on residues Lys16, Lys17, Lys21, and Lys24. N6-crotonyllysine; alternate occurs at positions 16, 17, 21, and 24. N6-lactoyllysine; alternate is present on residues Lys16, Lys17, Lys21, and Lys24. At Lys17 the chain carries N6-glutaryllysine; alternate. 2 positions are modified to N6-(2-hydroxyisobutyryl)lysine; alternate: Lys21 and Lys24. Position 21 is an N6-(beta-hydroxybutyryl)lysine; alternate (Lys21). At Lys21 the chain carries N6-butyryllysine; alternate. Lys21 is covalently cross-linked (Glycyl lysine isopeptide (Lys-Gly) (interchain with G-Cter in SUMO2); alternate). N6-(2-hydroxyisobutyryl)lysine is present on Lys25. Lys35 is modified (N6-(2-hydroxyisobutyryl)lysine; alternate). At Lys35 the chain carries N6-(beta-hydroxybutyryl)lysine; alternate. Residue Lys35 is modified to N6-crotonyllysine; alternate. At Lys35 the chain carries N6-glutaryllysine; alternate. Lys35 is subject to N6-succinyllysine; alternate. Lys35 participates in a covalent cross-link: Glycyl lysine isopeptide (Lys-Gly) (interchain with G-Cter in ubiquitin); alternate. Residue Glu36 is modified to PolyADP-ribosyl glutamic acid. Phosphoserine; by AMPK is present on Ser37. An N6-(2-hydroxyisobutyryl)lysine; alternate mark is found at Lys44, Lys47, and Lys58. Lys44 carries the N6-lactoyllysine; alternate modification. N6-glutaryllysine; alternate is present on residues Lys44 and Lys47. Position 47 is an N6-methyllysine; alternate (Lys47). Residue Lys58 is modified to N6,N6-dimethyllysine; alternate. Residue Arg80 is modified to Dimethylated arginine. Lys86 carries the N6-(2-hydroxyisobutyryl)lysine; alternate modification. The residue at position 86 (Lys86) is an N6-acetyllysine; alternate. Lys86 is subject to N6-lactoyllysine; alternate. Lys86 is modified (N6,N6,N6-trimethyllysine; alternate). Omega-N-methylarginine is present on residues Arg87 and Arg93. Lys109 is subject to N6-(2-hydroxyisobutyryl)lysine; alternate. Lys109 is modified (N6-(beta-hydroxybutyryl)lysine; alternate). Lys109 carries the N6-lactoyllysine; alternate modification. N6-glutaryllysine; alternate is present on Lys109. Residue Lys109 is modified to N6-methyllysine; alternate. The O-linked (GlcNAc) serine glycan is linked to Ser113. Residue Thr116 is modified to Phosphothreonine. N6-(2-hydroxyisobutyryl)lysine; alternate occurs at positions 117 and 121. At Lys117 the chain carries N6-(beta-hydroxybutyryl)lysine; alternate. N6-lactoyllysine; alternate is present on residues Lys117 and Lys121. 2 positions are modified to N6-glutaryllysine; alternate: Lys117 and Lys121. N6-succinyllysine; alternate occurs at positions 117 and 121. Lys117 carries the N6-methylated lysine; alternate modification. A Glycyl lysine isopeptide (Lys-Gly) (interchain with G-Cter in ubiquitin); alternate cross-link involves residue Lys121.

This sequence belongs to the histone H2B family. The nucleosome is a histone octamer containing two molecules each of H2A, H2B, H3 and H4 assembled in one H3-H4 heterotetramer and two H2A-H2B heterodimers. The octamer wraps approximately 147 bp of DNA. Post-translationally, monoubiquitination at Lys-35 (H2BK34Ub) by the MSL1/MSL2 dimer is required for histone H3 'Lys-4' (H3K4me) and 'Lys-79' (H3K79me) methylation and transcription activation at specific gene loci, such as HOXA9 and MEIS1 loci. Similarly, monoubiquitination at Lys-121 (H2BK120Ub) by the RNF20/40 complex gives a specific tag for epigenetic transcriptional activation and is also prerequisite for histone H3 'Lys-4' and 'Lys-79' methylation. It also functions cooperatively with the FACT dimer to stimulate elongation by RNA polymerase II. H2BK120Ub also acts as a regulator of mRNA splicing: deubiquitination by USP49 is required for efficient cotranscriptional splicing of a large set of exons. Phosphorylated on Ser-15 (H2BS14ph) by STK4/MST1 during apoptosis; which facilitates apoptotic chromatin condensation. Also phosphorylated on Ser-15 in response to DNA double strand breaks (DSBs), and in correlation with somatic hypermutation and immunoglobulin class-switch recombination. Phosphorylation at Ser-37 (H2BS36ph) by AMPK in response to stress promotes transcription. In terms of processing, glcNAcylation at Ser-113 promotes monoubiquitination of Lys-121. It fluctuates in response to extracellular glucose, and associates with transcribed genes. Post-translationally, ADP-ribosylated by PARP1 or PARP2 on Ser-7 (H2BS6ADPr) in response to DNA damage. H2BS6ADPr promotes recruitment of CHD1L. Mono-ADP-ribosylated on Glu-3 (H2BE2ADPr) by PARP3 in response to single-strand breaks. Poly ADP-ribosylation on Glu-36 (H2BE35ADPr) by PARP1 regulates adipogenesis: it inhibits phosphorylation at Ser-37 (H2BS36ph), thereby blocking expression of pro-adipogenetic genes. Crotonylation (Kcr) is specifically present in male germ cells and marks testis-specific genes in post-meiotic cells, including X-linked genes that escape sex chromosome inactivation in haploid cells. Crotonylation marks active promoters and enhancers and confers resistance to transcriptional repressors. It is also associated with post-meiotically activated genes on autosomes. In terms of processing, hydroxybutyrylation of histones is induced by starvation. Post-translationally, lactylated in macrophages by EP300/P300 by using lactoyl-CoA directly derived from endogenous or exogenous lactate, leading to stimulates gene transcription.

Its subcellular location is the nucleus. It localises to the chromosome. In terms of biological role, core component of nucleosome. Nucleosomes wrap and compact DNA into chromatin, limiting DNA accessibility to the cellular machineries which require DNA as a template. Histones thereby play a central role in transcription regulation, DNA repair, DNA replication and chromosomal stability. DNA accessibility is regulated via a complex set of post-translational modifications of histones, also called histone code, and nucleosome remodeling. The polypeptide is Histone H2B type 1-P (Hist1h2bp) (Mus musculus (Mouse)).